The chain runs to 200 residues: NADH-quinone oxidoreductase subunit C (200 aa).

This sequence belongs to the complex I 30 kDa subunit family. In terms of assembly, NDH-1 is composed of 14 different subunits. Subunits NuoB, C, D, E, F, and G constitute the peripheral sector of the complex.

It localises to the cell inner membrane. The catalysed reaction is a quinone + NADH + 5 H(+)(in) = a quinol + NAD(+) + 4 H(+)(out). Its function is as follows. NDH-1 shuttles electrons from NADH, via FMN and iron-sulfur (Fe-S) centers, to quinones in the respiratory chain. The immediate electron acceptor for the enzyme in this species is believed to be ubiquinone. Couples the redox reaction to proton translocation (for every two electrons transferred, four hydrogen ions are translocated across the cytoplasmic membrane), and thus conserves the redox energy in a proton gradient. This Ruegeria pomeroyi (strain ATCC 700808 / DSM 15171 / DSS-3) (Silicibacter pomeroyi) protein is NADH-quinone oxidoreductase subunit C.